The chain runs to 129 residues: Lysozyme C (129 aa).

Residues lysine 1–leucine 129 enclose the C-type lysozyme domain. 4 cysteine pairs are disulfide-bonded: cysteine 6-cysteine 127, cysteine 30-cysteine 115, cysteine 64-cysteine 80, and cysteine 76-cysteine 94. Catalysis depends on residues glutamate 35 and aspartate 52.

Belongs to the glycosyl hydrolase 22 family. In terms of assembly, monomer.

The protein localises to the secreted. It carries out the reaction Hydrolysis of (1-&gt;4)-beta-linkages between N-acetylmuramic acid and N-acetyl-D-glucosamine residues in a peptidoglycan and between N-acetyl-D-glucosamine residues in chitodextrins.. Functionally, lysozymes have primarily a bacteriolytic function; those in tissues and body fluids are associated with the monocyte-macrophage system and enhance the activity of immunoagents. The sequence is that of Lysozyme C (LYZ) from Lophura leucomelanos (Kalij pheasant).